We begin with the raw amino-acid sequence, 327 residues long: tRNA U34 carboxymethyltransferase (327 aa).

Residues Lys91, Trp105, Lys110, Gly130, 181-182 (IE), Met196, Tyr200, and Arg315 each bind carboxy-S-adenosyl-L-methionine.

This sequence belongs to the class I-like SAM-binding methyltransferase superfamily. CmoB family. As to quaternary structure, homotetramer.

The catalysed reaction is carboxy-S-adenosyl-L-methionine + 5-hydroxyuridine(34) in tRNA = 5-carboxymethoxyuridine(34) in tRNA + S-adenosyl-L-homocysteine + H(+). Its function is as follows. Catalyzes carboxymethyl transfer from carboxy-S-adenosyl-L-methionine (Cx-SAM) to 5-hydroxyuridine (ho5U) to form 5-carboxymethoxyuridine (cmo5U) at position 34 in tRNAs. This chain is tRNA U34 carboxymethyltransferase, found in Pectobacterium atrosepticum (strain SCRI 1043 / ATCC BAA-672) (Erwinia carotovora subsp. atroseptica).